The following is a 266-amino-acid chain: Sec-independent protein translocase protein TatC (266 aa).

Transmembrane regions (helical) follow at residues 28–48, 93–113, 134–154, 183–203, 221–241, and 242–262; these read MIIA…YILF, FNIY…PYIF, GIIM…YFIL, LIMH…FIYF, HAFL…IFST, and IVVL…SFYV.

Belongs to the TatC family. As to quaternary structure, forms a complex with TatA.

It localises to the cell inner membrane. Part of the twin-arginine translocation (Tat) system that transports large folded proteins containing a characteristic twin-arginine motif in their signal peptide across membranes. This Blattabacterium sp. subsp. Periplaneta americana (strain BPLAN) (Periplaneta americana symbiotic bacterium) protein is Sec-independent protein translocase protein TatC.